We begin with the raw amino-acid sequence, 603 residues long: UPF0313 protein MJ1155 (603 aa).

In terms of domain architecture, Radical SAM core spans 285-557 (GIVPVQFSVV…KIQKAICLYR (273 aa)). [4Fe-4S] cluster contacts are provided by C299, C303, and C306.

This sequence belongs to the UPF0313 family. [4Fe-4S] cluster is required as a cofactor.

This Methanocaldococcus jannaschii (strain ATCC 43067 / DSM 2661 / JAL-1 / JCM 10045 / NBRC 100440) (Methanococcus jannaschii) protein is UPF0313 protein MJ1155.